The chain runs to 526 residues: Probable metalloreductase AIM14 (526 aa).

The next 7 helical transmembrane spans lie at Ile-17–Leu-37, Leu-60–Phe-80, Arg-96–Leu-113, Cys-138–Glu-158, Leu-172–Met-192, Ala-199–Ala-219, and Pro-221–Ala-241. The Ferric oxidoreductase domain occupies Leu-97–Val-214. In terms of domain architecture, FAD-binding FR-type spans Gln-238 to Pro-370.

It belongs to the ferric reductase (FRE) family. AIM14 subfamily.

The protein resides in the membrane. In terms of biological role, probable cell surface metalloreductase. May be involved in iron or copper homeostasis. The protein is Probable metalloreductase AIM14 (AIM14) of Zygosaccharomyces rouxii (strain ATCC 2623 / CBS 732 / NBRC 1130 / NCYC 568 / NRRL Y-229).